The sequence spans 180 residues: NADH-quinone oxidoreductase subunit I (180 aa).

4Fe-4S ferredoxin-type domains follow at residues 44 to 74 and 90 to 119; these read LNRYPDGLEKCIGCELCAWACPADAIYVEGA and RVYQINYLRCIGCGLCIEACPTRALTMTTE. Residues cysteine 54, cysteine 57, cysteine 60, cysteine 64, cysteine 99, cysteine 102, cysteine 105, and cysteine 109 each contribute to the [4Fe-4S] cluster site. The tract at residues 145-180 is disordered; sequence MQAPPHDMAPGKTDDDYYLGNVTPITPVPSGTEDAR.

This sequence belongs to the complex I 23 kDa subunit family. As to quaternary structure, NDH-1 is composed of 14 different subunits. Subunits NuoA, H, J, K, L, M, N constitute the membrane sector of the complex. Requires [4Fe-4S] cluster as cofactor.

The protein localises to the cell membrane. The enzyme catalyses a quinone + NADH + 5 H(+)(in) = a quinol + NAD(+) + 4 H(+)(out). In terms of biological role, NDH-1 shuttles electrons from NADH, via FMN and iron-sulfur (Fe-S) centers, to quinones in the respiratory chain. The immediate electron acceptor for the enzyme in this species is believed to be menaquinone. Couples the redox reaction to proton translocation (for every two electrons transferred, four hydrogen ions are translocated across the cytoplasmic membrane), and thus conserves the redox energy in a proton gradient. This chain is NADH-quinone oxidoreductase subunit I, found in Mycolicibacterium smegmatis (strain ATCC 700084 / mc(2)155) (Mycobacterium smegmatis).